We begin with the raw amino-acid sequence, 887 residues long: Autotaxin (887 aa).

A signal peptide spans 1 to 27 (MARQGCLGSFQVISLFTFAISVNICLG). The propeptide at 28–35 (FTASRIKR) is removed by furin. N-linked (GlcNAc...) asparagine glycosylation occurs at asparagine 53. 2 SMB domains span residues 54–97 (TSGS…LKTA) and 98–142 (RGWE…GESH). 10 cysteine pairs are disulfide-bonded: cysteine 58–cysteine 75, cysteine 62–cysteine 93, cysteine 73–cysteine 86, cysteine 79–cysteine 85, cysteine 102–cysteine 119, cysteine 107–cysteine 137, cysteine 117–cysteine 130, cysteine 123–cysteine 129, cysteine 148–cysteine 194, and cysteine 156–cysteine 350. The Cell attachment site motif lies at 126–128 (RGD). The segment at 144–501 (VDDDCEEIKV…PTFKYRTKVP (358 aa)) is phosphodiesterase. Zn(2+) is bound by residues aspartate 171 and threonine 209. Residue threonine 209 is the Nucleophile of the active site. Residues threonine 209, asparagine 230, and aspartate 311 each coordinate 1-(9Z-octadecenoyl)-sn-glycero-3-phosphate. Residues threonine 209, asparagine 230, and aspartate 311 each contribute to the 1-hexadecanoyl-sn-glycero-3-phosphate site. Positions 209, 230, and 311 each coordinate 1-tetradecanoyl-sn-glycerol 3-phosphate. Zn(2+)-binding residues include aspartate 311, histidine 315, aspartate 358, and histidine 359. 5 disulfide bridges follow: cysteine 366–cysteine 468, cysteine 413–cysteine 830, cysteine 566–cysteine 691, cysteine 568–cysteine 676, and cysteine 799–cysteine 809. Asparagine 398 and asparagine 410 each carry an N-linked (GlcNAc...) asparagine glycan. Histidine 474 is a binding site for Zn(2+). Residue histidine 474 participates in 1-(9Z-octadecenoyl)-sn-glycero-3-phosphate binding. Histidine 474 provides a ligand contact to 1-hexadecanoyl-sn-glycero-3-phosphate. Histidine 474 is a binding site for 1-tetradecanoyl-sn-glycerol 3-phosphate. Residue asparagine 524 is glycosylated (N-linked (GlcNAc...) asparagine). Residues 586–607 (HTKGSTEAETGKFRGSKHENKK) are compositionally biased toward basic and acidic residues. Residues 586 to 615 (HTKGSTEAETGKFRGSKHENKKNLNGSVEP) are disordered. An N-linked (GlcNAc...) asparagine glycan is attached at asparagine 610. The tract at residues 622–887 (LYGRPAVLYR…TYLHTYESEI (266 aa)) is nuclease-like domain. Residues aspartate 764, asparagine 766, aspartate 768, leucine 770, and aspartate 772 each contribute to the Ca(2+) site. A glycan (N-linked (GlcNAc...) asparagine) is linked at asparagine 831. Residues 854 to 875 (IEHLTGLDFYRKTSRSYSEILT) form a required for secretion region.

The protein belongs to the nucleotide pyrophosphatase/phosphodiesterase family. The cofactor is Zn(2+). Ca(2+) is required as a cofactor. N-glycosylation, but not furin-cleavage, plays a critical role on secretion and on lysoPLD activity. Post-translationally, the interdomain disulfide bond between Cys-413 and Cys-830 is essential for catalytic activity. In terms of tissue distribution, abundantly expressed in cerebrum and cerebellum. Localized in secretory epithelial cells in the brain and the eye including choroid plexus epithelial cells, ciliary epithelial cells, iris pigment epithelial cells, and retinal pigment cells.

It localises to the secreted. It catalyses the reaction a 1-O-alkyl-sn-glycero-3-phosphoethanolamine + H2O = a 1-O-alkyl-sn-glycero-3-phosphate + ethanolamine + H(+). The enzyme catalyses a 1-acyl-sn-glycero-3-phosphoethanolamine + H2O = a 1-acyl-sn-glycero-3-phosphate + ethanolamine + H(+). It carries out the reaction 1-(9Z-octadecenoyl)-sn-glycero-3-phosphoethanolamine + H2O = 1-(9Z-octadecenoyl)-sn-glycero-3-phosphate + ethanolamine + H(+). The catalysed reaction is a 1-O-alkyl-sn-glycero-3-phosphocholine + H2O = a 1-O-alkyl-sn-glycero-3-phosphate + choline + H(+). It catalyses the reaction 1-O-(9Z-octadecenyl)-sn-glycero-3-phosphocholine + H2O = 1-O-(9Z-octadecenyl)-sn-glycero-3-phosphate + choline + H(+). The enzyme catalyses 1-O-hexadecyl-sn-glycero-3-phosphocholine + H2O = 1-O-hexadecyl-sn-glycero-3-phosphate + choline + H(+). It carries out the reaction a 1-O-(1Z-alkenyl)-sn-glycero-3-phosphocholine + H2O = a 1-O-(1Z-alkenyl)-sn-glycero-3-phosphate + choline + H(+). The catalysed reaction is a 1-acyl-sn-glycero-3-phosphocholine + H2O = a 1-acyl-sn-glycero-3-phosphate + choline + H(+). It catalyses the reaction 1-dodecanoyl-sn-glycero-3-phosphocholine + H2O = 1-dodecanoyl-sn-glycerol 3-phosphate + choline + H(+). The enzyme catalyses 1-(9Z-octadecenoyl)-sn-glycero-3-phosphocholine + H2O = 1-(9Z-octadecenoyl)-sn-glycero-3-phosphate + choline + H(+). It carries out the reaction 1-tetradecanoyl-sn-glycero-3-phosphocholine + H2O = 1-tetradecanoyl-sn-glycerol 3-phosphate + choline + H(+). The catalysed reaction is 1-decanoyl-sn-glycero-3-phosphocholine + H2O = 1-decanoyl-sn-glycero-3-phosphate + choline + H(+). It catalyses the reaction 1-octadecanoyl-sn-glycero-3-phosphocholine + H2O = 1-octadecanoyl-sn-glycero-3-phosphate + choline + H(+). The enzyme catalyses 1-hexadecanoyl-sn-glycero-3-phosphocholine + H2O = 1-hexadecanoyl-sn-glycero-3-phosphate + choline + H(+). It carries out the reaction 1-hexanoyl-sn-glycero-3-phosphocholine + H2O = 1-hexanoyl-sn-glycero-3-phosphate + choline + H(+). The catalysed reaction is 1-(9Z,12Z)-octadecadienoyl-sn-glycero-3-phosphocholine + H2O = 1-(9Z,12Z)-octadecadienoyl-sn-glycero-3-phosphate + choline + H(+). It catalyses the reaction sphing-4-enine-phosphocholine + H2O = sphing-4-enine 1-phosphate + choline + H(+). The enzyme catalyses 1-(5Z,8Z,11Z,14Z-eicosatetraenoyl)-sn-glycero-3-phosphocholine + H2O = 1-(5Z,8Z,11Z,14Z-eicosatetraenoyl)-sn-glycero-3-phosphate + choline + H(+). It carries out the reaction a 2-acyl-sn-glycero-3-phosphocholine + H2O = a 2-acyl-sn-glycerol 3-phosphate + choline + H(+). The catalysed reaction is a 1,2-diacyl-sn-glycero-3-phosphocholine + H2O = a 1,2-diacyl-sn-glycero-3-phosphate + choline + H(+). It catalyses the reaction 1,2-dioctanoyl-sn-glycero-3-phosphocholine + H2O = 1,2-dioctanoyl-sn-glycero-3-phosphate + choline + H(+). The enzyme catalyses 1,2-didecanoyl-sn-glycero-3-phosphocholine + H2O = 1,2-didecanoyl-sn-glycero-3-phosphate + choline + H(+). It carries out the reaction a 1-acyl-sn-glycero-3-phospho-L-serine + H2O = a 1-acyl-sn-glycero-3-phosphate + L-serine + H(+). The catalysed reaction is 1-(9Z-octadecenoyl)-sn-glycero-3-phospho-L-serine + H2O = 1-(9Z-octadecenoyl)-sn-glycero-3-phosphate + L-serine + H(+). It catalyses the reaction a 2-acyl-sn-glycero-3-phospho-L-serine + H2O = a 2-acyl-sn-glycerol 3-phosphate + L-serine + H(+). Its activity is regulated as follows. Inhibited by vanadate. Inhibited by micromolar levels of bile salts, such as tauroursodeoxycholate. Not inhibited by taurodeoxycholate. Not inhibited by hydroxysterols, such as 7-hydroxycholesterol, testosterone, dexamethasone and prednisolone. Inhibited by EDTA and EGTA. Functionally, secreted lysophospholipase D that hydrolyzes lysophospholipids to produce the signaling molecule lysophosphatidic acid (LPA) in extracellular fluids. Its major substrate is lysophosphatidylcholine. Can also act on sphingosylphosphorylcholine producing sphingosine-1-phosphate, a modulator of cell motility. Can hydrolyze, in vitro, bis-pNPP, to some extent pNP-TMP, and barely ATP. Involved in several motility-related processes such as angiogenesis and neurite outgrowth. Acts as an angiogenic factor by stimulating migration of smooth muscle cells and microtubule formation. Stimulates migration of melanoma cells, probably via a pertussis toxin-sensitive G protein. May have a role in induction of parturition. Possible involvement in cell proliferation and adipose tissue development. Required for LPA production in activated platelets, cleaves the sn-1 lysophospholipids to generate sn-1 lysophosphatidic acids containing predominantly 18:2 and 20:4 fatty acids. Shows a preference for the sn-1 to the sn-2 isomer of 1-O-alkyl-sn-glycero-3-phosphocholine (lyso-PAF). This chain is Autotaxin, found in Rattus norvegicus (Rat).